We begin with the raw amino-acid sequence, 287 residues long: POU domain class 2-associating factor 2 (287 aa).

The region spanning 10–32 is the OCA domain; sequence KRVYQGVRVKHTVKDLLAEKRSR. Disordered regions lie at residues 24-51, 161-199, and 247-279; these read DLLAEKRSRQTSNTRLNGSVSSSQPPFI, TVPDGLSQPDPMPADALQSLPPSTSCLSQLESGSSTQHR, and PKVGPLSPEEGSDVSSLHDPSPWTKEDGSMAWG. Polar residues-rich tracts occupy residues 33–49 and 180–199; these read QTSNTRLNGSVSSSQPP and LPPSTSCLSQLESGSSTQHR.

This sequence belongs to the POU2AF family. As to quaternary structure, interacts with POU2F3 (via the POU domain) in a DNA-dependent manner; this interaction recruits POU2AF2 to chromatin and increases POU2F3 transactivation activity. In terms of tissue distribution, expressed in tuft cells of the small intestine, trachea, thymus, and colon.

Its subcellular location is the cytoplasm. The protein resides in the cytosol. It is found in the nucleus. Its function is as follows. Transcriptional coactivator of POU2F3. This complex drives the development of tuft cells, a rare chemosensory cells that coordinate immune and neural functions within mucosal epithelial tissues. This Mus musculus (Mouse) protein is POU domain class 2-associating factor 2.